The chain runs to 227 residues: Response regulator protein TodT (227 aa).

One can recognise a Response regulatory domain in the interval 28–142; that stretch reads VIYILDDDNA…ELLGAIRAAL (115 aa). At aspartate 77 the chain carries 4-aspartylphosphate. The region spanning 158 to 223 is the HTH luxR-type domain; the sequence is LKENYESLSK…DLVRVTERLK (66 aa). The H-T-H motif DNA-binding region spans 182–201; sequence NKQTALELDISEATVKVHRH.

In terms of processing, phosphorylated by TodS.

The protein resides in the cytoplasm. In terms of biological role, member of the two-component regulatory system TodS/TodT involved in the regulation of toluene degradation. Phosphorylated TodT activates transcription of the tod operon (todXFC1C2BADEGIH). Binds specifically to a 6-bp palindromic DNA structure in the tod promoter region. The protein is Response regulator protein TodT (todT) of Pseudomonas putida (strain ATCC 700007 / DSM 6899 / JCM 31910 / BCRC 17059 / LMG 24140 / F1).